A 122-amino-acid polypeptide reads, in one-letter code: Large ribosomal subunit protein uL14 (122 aa).

This sequence belongs to the universal ribosomal protein uL14 family. Part of the 50S ribosomal subunit. Forms a cluster with proteins L3 and L19. In the 70S ribosome, L14 and L19 interact and together make contacts with the 16S rRNA in bridges B5 and B8.

Its function is as follows. Binds to 23S rRNA. Forms part of two intersubunit bridges in the 70S ribosome. This is Large ribosomal subunit protein uL14 from Coxiella burnetii (strain RSA 331 / Henzerling II).